Reading from the N-terminus, the 566-residue chain is Type 2 DNA topoisomerase 6 subunit B (566 aa).

ATP is bound by residues asparagine 48, aspartate 80, 101 to 102 (TK), 111 to 118 (GQQGIGIS), and lysine 475.

Belongs to the TOP6B family. As to quaternary structure, homodimer. Heterotetramer of two Top6A and two Top6B chains.

It catalyses the reaction ATP-dependent breakage, passage and rejoining of double-stranded DNA.. Its function is as follows. Relaxes both positive and negative superturns and exhibits a strong decatenase activity. The sequence is that of Type 2 DNA topoisomerase 6 subunit B from Thermococcus sibiricus (strain DSM 12597 / MM 739).